A 178-amino-acid polypeptide reads, in one-letter code: Major urinary protein 4 (178 aa).

A signal peptide spans methionine 1–alanine 16. Cysteine 80 and cysteine 173 are disulfide-bonded.

This sequence belongs to the calycin superfamily. Lipocalin family. Expressed in lacrimal gland, parotid gland, sublingual gland, nasal mucus, and vomeronasal organ.

It localises to the secreted. Binds pheromones, likely to displace pheromones complexed to urinary MUPs and transport them to the vomeronasal organ (VNO) where they associate with their neuronal receptor(s). MUP4 is highly specific for the male mouse pheromone 2-sec-butyl-4,5-dihydrothiazole (SBT). This Mus musculus (Mouse) protein is Major urinary protein 4 (Mup4).